A 649-amino-acid polypeptide reads, in one-letter code: Arylsulfatase (649 aa).

The N-terminal stretch at 1–22 (MLQRLVVALCLLGFAALTAAAA) is a signal peptide. The Ca(2+) site is built by Asp-34 and Asp-35. N-linked (GlcNAc...) asparagine glycosylation occurs at Asn-41. Residue Cys-72 participates in Ca(2+) binding. The active-site Nucleophile is the Cys-72. A 3-oxoalanine (Cys) modification is found at Cys-72. 3 N-linked (GlcNAc...) asparagine glycosylation sites follow: Asn-89, Asn-224, and Asn-279. 2 residues coordinate Ca(2+): Asp-324 and Asn-325. Residues Asn-445, Asn-489, and Asn-531 are each glycosylated (N-linked (GlcNAc...) asparagine).

The protein belongs to the sulfatase family. It depends on Ca(2+) as a cofactor. The conversion to 3-oxoalanine (also known as C-formylglycine, FGly), of a serine or cysteine residue in prokaryotes and of a cysteine residue in eukaryotes, is critical for catalytic activity.

It is found in the periplasm. The enzyme catalyses an aryl sulfate + H2O = a phenol + sulfate + H(+). Its activity is regulated as follows. Inhibited by Na(3)BO(3) and KCN. No inhibition by sodium dodecyl sulfate, even at high concentration. Its function is as follows. Is commonly produced by soil microorganisms and plays an important role in the mineralization of sulfates. This chain is Arylsulfatase, found in Volvox carteri (Green alga).